The following is a 551-amino-acid chain: Scaffold protein D13 ortholog (551 aa).

This sequence belongs to the poxviridae protein D13 family. Homotrimer. Self-assembles to form a layer. Interacts with A17 (via N-terminus); this interaction is necessary for D13 association with membranes.

Its subcellular location is the membrane. Functionally, scaffold protein which forms a transitory spherical honeycomb lattice providing curvature and rigidity to the convex membrane of crescent and immature virions (IV). This association occurs concomitantly with viral membrane formation. Targeted by the drug rifampicin, which prevents the formation of this lattice, and hence virus morphogenesis. In the presence of rifampicin, irregularly shaped membranes that lack the honeycomb layer accumulate around areas of electron-dense viroplasm. This layer is lost from virions during maturation from IV to mature virion (MV), through the proteolysis of A17 N-terminus. This is Scaffold protein D13 ortholog from Sus scrofa (Pig).